A 748-amino-acid chain; its full sequence is Cytosolic phospholipase A2 (748 aa).

The phospholipid binding stretch occupies residues 1 to 178 (MSFIDPYQHI…MKSFLGEENS (178 aa)). A C2 domain is found at 6-124 (PYQHIVVEHQ…GEKKEVQLTF (119 aa)). 7 residues coordinate Ca(2+): Asp40, Thr41, Asp43, Asn65, Asp93, Ala94, and Asn95. The region spanning 138–740 (VCSSTDLRFS…SSVEARRFFN (603 aa)) is the PLA2c domain. Residue Ser228 is the Nucleophile of the active site. Positions 431 to 459 (SNDSSDSEDESQHPKGTENSEANEEYQNS) are disordered. The segment covering 449-459 (NSEANEEYQNS) has biased composition (polar residues). A Phosphoserine; by MAPK modification is found at Ser505. Asp549 serves as the catalytic Proton acceptor.

Activated by phosphorylation on a serine residue.

It localises to the cytoplasm. The protein resides in the cytoplasmic vesicle. The enzyme catalyses a 1,2-diacyl-sn-glycero-3-phosphocholine + H2O = a 1-acyl-sn-glycero-3-phosphocholine + a fatty acid + H(+). It catalyses the reaction a 1-acyl-sn-glycero-3-phosphocholine + H2O = sn-glycerol 3-phosphocholine + a fatty acid + H(+). Stimulated by agonists such as ATP, EGF, thrombin and bradykinin as well as by cytosolic Ca(2+). Its function is as follows. Selectively hydrolyzes arachidonyl phospholipids in the sn-2 position releasing arachidonic acid. Together with its lysophospholipid activity, it is implicated in the initiation of the inflammatory response. The polypeptide is Cytosolic phospholipase A2 (PLA2G4A) (Gallus gallus (Chicken)).